A 647-amino-acid chain; its full sequence is Pollen receptor-like kinase 2 (647 aa).

The N-terminal stretch at 1-21 (MESKCLMFVSIVSVFFMVVNG) is a signal peptide. 5 LRR repeats span residues 87-109 (LNSL…EFKK), 110-134 (LVAL…AFDG), 136-159 (GWLK…LVKS), 161-183 (KLIE…RHHP), and 185-203 (MLNL…SFST). The chain crosses the membrane as a helical span at residues 248–268 (IVAAAVAALAASLIIIGVVIF). A Protein kinase domain is found at 338–613 (KASAEILGSG…EAVEKMEDLM (276 aa)). S340 bears the Phosphoserine mark. Residues 344-352 (LGSGCFGAS) and K366 each bind ATP. S418 bears the Phosphoserine mark. Residue T438 is modified to Phosphothreonine. Phosphotyrosine is present on Y508. A disordered region spans residues 620-647 (DDDFYSTYASEADGRSSRGLSSEGINLS). The segment covering 637–647 (RGLSSEGINLS) has biased composition (polar residues).

Belongs to the protein kinase superfamily. Ser/Thr protein kinase family. As to quaternary structure, part of a complex containing ROPGEF1 and ARAC11/ROP1. The interaction between PRK2, ROPGEF1 and ARAC11/ROP1 is phosphorylation-independent. Interacts with ROPGEF12 (via C-terminus). Interacts with ROPGEF1 (via PRONE domain). As to expression, expressed in pollen and/or in flowers, but not in leaves. Expressed in pollen tube.

It is found in the cell membrane. The enzyme catalyses L-seryl-[protein] + ATP = O-phospho-L-seryl-[protein] + ADP + H(+). It catalyses the reaction L-threonyl-[protein] + ATP = O-phospho-L-threonyl-[protein] + ADP + H(+). The phosphorylation activity is calcium-independent. Its function is as follows. Receptor-like kinase involved in the control of pollen germination and pollen tube polar growth. Phosphorylates ROPGEF1 in its C-terminal region, releasing its auto-inhibition, and thereby activating the ROP1 signaling pathway. May act as a scaffolding protein, recruiting ROPGEF12 to the plasma membrane by binding to its C-terminal domain. Phosphorylates ROPGEF12, releasing its auto-inhibition. This chain is Pollen receptor-like kinase 2, found in Arabidopsis thaliana (Mouse-ear cress).